A 236-amino-acid polypeptide reads, in one-letter code: Small ribosomal subunit protein uS2c (236 aa).

The protein belongs to the universal ribosomal protein uS2 family.

It is found in the plastid. The protein resides in the chloroplast. The protein is Small ribosomal subunit protein uS2c (rps2) of Helianthus annuus (Common sunflower).